Consider the following 277-residue polypeptide: Ribosomal RNA small subunit methyltransferase A (277 aa).

Residues Asn-20, Leu-22, Gly-47, Glu-68, Asp-93, and Asn-114 each coordinate S-adenosyl-L-methionine.

Belongs to the class I-like SAM-binding methyltransferase superfamily. rRNA adenine N(6)-methyltransferase family. RsmA subfamily.

It is found in the cytoplasm. The catalysed reaction is adenosine(1518)/adenosine(1519) in 16S rRNA + 4 S-adenosyl-L-methionine = N(6)-dimethyladenosine(1518)/N(6)-dimethyladenosine(1519) in 16S rRNA + 4 S-adenosyl-L-homocysteine + 4 H(+). Specifically dimethylates two adjacent adenosines (A1518 and A1519) in the loop of a conserved hairpin near the 3'-end of 16S rRNA in the 30S particle. May play a critical role in biogenesis of 30S subunits. The chain is Ribosomal RNA small subunit methyltransferase A from Aliivibrio salmonicida (strain LFI1238) (Vibrio salmonicida (strain LFI1238)).